We begin with the raw amino-acid sequence, 196 residues long: Imidazole glycerol phosphate synthase subunit HisH (196 aa).

Residues 2 to 196 (NVVILDTGCA…AQLLKNFLEM (195 aa)) form the Glutamine amidotransferase type-1 domain. The Nucleophile role is filled by C77. Active-site residues include H178 and E180.

As to quaternary structure, heterodimer of HisH and HisF.

Its subcellular location is the cytoplasm. The enzyme catalyses 5-[(5-phospho-1-deoxy-D-ribulos-1-ylimino)methylamino]-1-(5-phospho-beta-D-ribosyl)imidazole-4-carboxamide + L-glutamine = D-erythro-1-(imidazol-4-yl)glycerol 3-phosphate + 5-amino-1-(5-phospho-beta-D-ribosyl)imidazole-4-carboxamide + L-glutamate + H(+). It catalyses the reaction L-glutamine + H2O = L-glutamate + NH4(+). It participates in amino-acid biosynthesis; L-histidine biosynthesis; L-histidine from 5-phospho-alpha-D-ribose 1-diphosphate: step 5/9. Functionally, IGPS catalyzes the conversion of PRFAR and glutamine to IGP, AICAR and glutamate. The HisH subunit catalyzes the hydrolysis of glutamine to glutamate and ammonia as part of the synthesis of IGP and AICAR. The resulting ammonia molecule is channeled to the active site of HisF. The polypeptide is Imidazole glycerol phosphate synthase subunit HisH (Salmonella choleraesuis (strain SC-B67)).